Consider the following 336-residue polypeptide: ATP-dependent 6-phosphofructokinase (336 aa).

Residue Gly11 coordinates ATP. Residue 21-25 participates in ADP binding; it reads RAVVR. ATP contacts are provided by residues 72–73 and 102–105; these read RY and GDGS. Asp103 is a Mg(2+) binding site. Position 125–127 (125–127) interacts with substrate; it reads TID. Asp127 (proton acceptor) is an active-site residue. ADP is bound at residue Arg154. Residues Arg162 and 169-171 each bind substrate; that span reads MGR. ADP is bound by residues 185–187, Lys211, and 213–215; these read GAD and KKH. Substrate-binding positions include Glu222, Arg244, and 250–253; that span reads HIQR.

It belongs to the phosphofructokinase type A (PFKA) family. ATP-dependent PFK group I subfamily. Prokaryotic clade 'B1' sub-subfamily. Homotetramer. Requires Mg(2+) as cofactor.

The protein localises to the cytoplasm. The enzyme catalyses beta-D-fructose 6-phosphate + ATP = beta-D-fructose 1,6-bisphosphate + ADP + H(+). It functions in the pathway carbohydrate degradation; glycolysis; D-glyceraldehyde 3-phosphate and glycerone phosphate from D-glucose: step 3/4. With respect to regulation, allosterically activated by ADP and other diphosphonucleosides, and allosterically inhibited by phosphoenolpyruvate. In terms of biological role, catalyzes the phosphorylation of D-fructose 6-phosphate to fructose 1,6-bisphosphate by ATP, the first committing step of glycolysis. The chain is ATP-dependent 6-phosphofructokinase from Streptococcus sanguinis (strain SK36).